The primary structure comprises 297 residues: HTH-type transcriptional regulator ArgP (297 aa).

An HTH lysR-type domain is found at 4 to 60 (PDYRTLQALDAVIRERGFERAAQKLCITQSAVSQRIKQLENMFGQPLLVRTVPPRPT). The H-T-H motif DNA-binding region spans 21–40 (FERAAQKLCITQSAVSQRIK).

Belongs to the LysR transcriptional regulatory family. In terms of assembly, homodimer.

Controls the transcription of genes involved in arginine and lysine metabolism. The protein is HTH-type transcriptional regulator ArgP of Salmonella typhi.